Reading from the N-terminus, the 417-residue chain is Creatine kinase U-type, mitochondrial (417 aa).

The transit peptide at 1–39 (MAGPFSRLLSARPGLRLLALAGAGSLAAGFLLRPEPVRA) directs the protein to the mitochondrion. Residues 40–64 (ASERRRLYPPSAEYPDLRKHNNCMA) are cardiolipin-binding. The region spanning 45-131 (RLYPPSAEYP…FDPVIQERHN (87 aa)) is the Phosphagen kinase N-terminal domain. Ser151 carries the post-translational modification Phosphoserine. The region spanning 158–400 (YVLSSRVRTG…NYLIDCERRL (243 aa)) is the Phosphagen kinase C-terminal domain. 161–165 (SSRVR) is a binding site for ATP. A Phosphoserine modification is found at Ser196. Position 213 is a phosphothreonine (Thr213). Position 224 (His224) interacts with ATP. Ser232 carries the post-translational modification Phosphoserine. ATP contacts are provided by residues Arg269, Arg325, 353–358 (RGTGGV), and Asp368. Thr355 is modified (phosphothreonine).

This sequence belongs to the ATP:guanido phosphotransferase family. Exists as an octamer composed of four MTCK homodimers.

It localises to the mitochondrion inner membrane. The catalysed reaction is creatine + ATP = N-phosphocreatine + ADP + H(+). Its function is as follows. Reversibly catalyzes the transfer of phosphate between ATP and various phosphogens (e.g. creatine phosphate). Creatine kinase isoenzymes play a central role in energy transduction in tissues with large, fluctuating energy demands, such as skeletal muscle, heart, brain and spermatozoa. In Homo sapiens (Human), this protein is Creatine kinase U-type, mitochondrial (CKMT1A).